The chain runs to 211 residues: Protein 33K (211 aa).

Disordered stretches follow at residues 1-95 (MPPK…PCSL) and 107-140 (AGSP…QDSP). Residues 24–65 (DEEETWDDSQAEEVSDEEAEEQMESWDSLDEEDLEDVEEETI) are compositionally biased toward acidic residues. The span at 83-92 (KTIPPLPPQP) shows a compositional bias: pro residues. A compositionally biased stretch (polar residues) spans 129–140 (TSSAIATRQDSP). The tract at residues 154 to 181 (YAIFQQSRGQQLELKVKNRSLRSLTRSC) is necessary for nuclear subcellular location. The RS-repeat; required for splicing enhancer activity stretch occupies residues 160-180 (SRGQQLELKVKNRSLRSLTRS).

The protein belongs to the adenoviridae splicing factor family. In terms of assembly, homooligomer. Interacts with DBP; this interaction occurs at a unique vertex during genome packaging. Interacts with IVa2; this interaction occurs at a unique vertex during genome packaging and seems to potentiate IVa2 and 33K oligomerization. Phosphorylated in vitro by human PKA and PRKDC. PRKDC inhibits, whereas PKA activates the splicing factor.

It is found in the host nucleus. Its function is as follows. Promotes alternative splicing of late transcripts by promoting splicing at weak 3' splice sites. Required for the temporal activation of major late pre-mRNA splicing at late times of infection. Induces the splicing and expression of the late capsid vertex protein. In terms of biological role, probably functions as the small terminase that is part of the molecular motor that translocates genomic DNA in empty capsid during DNA packaging. This motor is located at a unique vertex and comprises at least the IVa2 ATPase, the small terminase 33K and probably a portal. Forms a ring-like structure of about 17 nm in which genomic DNA is translocated into the capsid. Stimulates IVa2 ATPase activity in the presence of the viral genome. Once the DNA is packaged, the terminase detaches: the 33K protein is present in the empty particles, but not in the mature virions. Also involved in virion assembly. The sequence is that of Protein 33K from Human adenovirus F serotype 40 (HAdV-40).